Consider the following 839-residue polypeptide: ABC transporter A family member 7 (839 aa).

7 helical membrane-spanning segments follow: residues 30-50 (GVQI…KLWI), 238-258 (IASL…LPLF), 286-306 (IMTF…ISLI), 321-341 (FALF…AFFL), 352-372 (SIFG…LSLF), 378-398 (VFYY…LCGL), and 419-439 (ILFW…YLDK). An ABC transporter domain is found at 525–756 (LIVQGLRKQF…FGDGYSVRID (232 aa)). 559-566 (GPNGAGKT) serves as a coordination point for ATP.

This sequence belongs to the ABC transporter superfamily. ABCA family.

The protein localises to the membrane. This chain is ABC transporter A family member 7 (abcA7), found in Dictyostelium discoideum (Social amoeba).